Consider the following 124-residue polypeptide: Translation initiation factor 5A (124 aa).

The interval 27-53 (TSYSTSKPGKHGSAKARVEGTGVFDGQ) is disordered. Residue lysine 36 is modified to Hypusine.

This sequence belongs to the eIF-5A family.

It is found in the cytoplasm. Its function is as follows. Functions by promoting the formation of the first peptide bond. The chain is Translation initiation factor 5A from Natronomonas pharaonis (strain ATCC 35678 / DSM 2160 / CIP 103997 / JCM 8858 / NBRC 14720 / NCIMB 2260 / Gabara) (Halobacterium pharaonis).